Reading from the N-terminus, the 558-residue chain is Germacrene A synthase short form (558 aa).

Mg(2+) contacts are provided by D311, D315, D455, T459, and E463. Positions 311 to 315 (DDTYD) match the DDXXD motif motif.

Belongs to the terpene synthase family. Requires Mg(2+) as cofactor. Expressed in roots and in green and etiolated seedlings.

The enzyme catalyses (2E,6E)-farnesyl diphosphate = (+)-(R)-germacrene A + diphosphate. It participates in secondary metabolite biosynthesis; terpenoid biosynthesis. Its function is as follows. Involved in sesquiterpene lactone biosynthesis. Produces exclusively (+)-germacrene A. The protein is Germacrene A synthase short form of Cichorium intybus (Chicory).